The chain runs to 457 residues: Multidrug resistance protein MdtK (457 aa).

12 helical membrane-spanning segments follow: residues 11–31 (LLALAIPVILAQIAQTAMGFV), 53–73 (IWLPAILFGHGLLLALTPVIA), 93–113 (WLAGFVSVLIMLVLWNAGYII), 127–147 (AVGYLRALLWGAPGYLFFQVA), 160–180 (GMVMGFIGLLVNIPVNYIFIY), 189–209 (GGVGCGVATAAVYWVMFLAMV), 243–263 (LPIALALFFEVTLFAVVALLV), 276–296 (IALNFSSLMFVLPMSLAAAVT), 314–334 (AARTGLMVGVCMATLTAIFTV), 350–370 (VVTLAAHLMLLAAVYQISDSI), 387–407 (IFYITFTAYWVLGLPSGYILA), and 418–438 (PAGFWIGFIIGLTSAAIMMML).

It belongs to the multi antimicrobial extrusion (MATE) (TC 2.A.66.1) family. MdtK subfamily.

It localises to the cell inner membrane. Functionally, multidrug efflux pump that functions probably as a Na(+)/drug antiporter. This is Multidrug resistance protein MdtK from Escherichia coli O9:H4 (strain HS).